A 686-amino-acid polypeptide reads, in one-letter code: Putative cuticle collagen 99 (686 aa).

Disordered regions lie at residues 42–79 and 163–444; these read PPIG…PVGP and GPIG…SLVA. Positions 67 to 79 are enriched in pro residues; that stretch reads PPGPPGERGPVGP. Triple-helical region regions lie at residues 142–201, 230–263, and 268–296; these read GMPG…KGDR, GPPG…GFDG, and GPKG…EKGD. Residues 231-243 are compositionally biased toward pro residues; sequence PPGPPGPPGPPGP. A compositionally biased stretch (basic and acidic residues) spans 246–256; that stretch reads RDGRHGMKGDR. Positions 306-318 are enriched in low complexity; sequence GQSVSTVSSSGSQ. Composition is skewed to basic and acidic residues over residues 361 to 373 and 401 to 417; these read EKGE…ETGD and RDGR…HGLR. Residues 394-439 form a triple-helical region region; sequence GPPGPPGRDGRPGEKGEKGEHGLRGDMGLPGPEGTPGKRGRRGRHG. N-linked (GlcNAc...) asparagine glycosylation is found at Asn-446 and Asn-535. Positions 475-650 are disordered; that stretch reads KNVIPGPPGP…TGPDGLPLPY (176 aa). Triple-helical region regions lie at residues 479-536, 538-576, and 577-636; these read PGPP…SGNQ, GPRG…PGPM, and GLRG…PGLD. Residues 540-549 are compositionally biased toward pro residues; the sequence is RGPPGLPGPP. Residues 563–581 show a composition bias toward low complexity; the sequence is QPGALGLPGHPGPMGLRGP.

This sequence belongs to the cuticular collagen family. As to quaternary structure, collagen polypeptide chains are complexed within the cuticle by disulfide bonds and other types of covalent cross-links.

Nematode cuticles are composed largely of collagen-like proteins. The cuticle functions both as an exoskeleton and as a barrier to protect the worm from its environment. The chain is Putative cuticle collagen 99 from Caenorhabditis briggsae.